We begin with the raw amino-acid sequence, 447 residues long: MTRLFGTDGVRGLANKTLTAPLALKLGAAAAHVLTAGTRPHGRRPVAIVGRDPRVSGEMLAAALAAGMASRGVDVLRVGVIPTPGVAFLTDDYGADMGVMISASHNPMPDNGIKFFSAGGHKLPDEVEDEIERVMDDLPEEGPTGHGIGRVIEEAPDARGRYLQHLADAVPTDLSGITVVVDAANGAASVIAPQAYEAAGAKVIAIHNTPNAYNINEKCGSTHMDQIQAAVLEHGADLGLAHDGDADRCLAVDSDGNIVDGDQIMAILAIAMKENSELRKNTLVATVMSNLGLKLAMEKADIQLRTTKVGDRYVLEELNAGGFALGGEQSGHIVLPDHGTTGDGTLTGLSLMARMAATGKPLSELAAAMTVLPQVLINVPVADKSSIMKSANVQAAVAAAEEELGGTGRVLLRPSGTEELFRVMVEAAEQEQARRVAGRLAAVVAEA.

Catalysis depends on S104, which acts as the Phosphoserine intermediate. 4 residues coordinate Mg(2+): S104, D243, D245, and D247. S104 carries the post-translational modification Phosphoserine.

Belongs to the phosphohexose mutase family. The cofactor is Mg(2+). Post-translationally, activated by phosphorylation.

The catalysed reaction is alpha-D-glucosamine 1-phosphate = D-glucosamine 6-phosphate. Catalyzes the conversion of glucosamine-6-phosphate to glucosamine-1-phosphate. This is Phosphoglucosamine mutase from Corynebacterium efficiens (strain DSM 44549 / YS-314 / AJ 12310 / JCM 11189 / NBRC 100395).